The chain runs to 147 residues: Protein phosphatase 1 regulatory subunit 14A (147 aa).

Residues 1 to 11 (MAAQRLGKRVL) show a composition bias toward basic residues. A disordered region spans residues 1–37 (MAAQRLGKRVLSKLQSPSRARGPGGSPGGLQKRHARV). A Phosphoserine modification is found at S26. Residues 35 to 120 (ARVTVKYDRR…LLAKLQGLHR (86 aa)) are inhibitory. The residue at position 38 (T38) is a Phosphothreonine; by PKC. The disordered stretch occupies residues 118 to 147 (LHRQPGLRQPSPSHDGSLSPLQDRARTAHP). A compositionally biased stretch (polar residues) spans 127–137 (PSPSHDGSLSP). A phosphoserine mark is found at S128, S134, and S136.

It belongs to the PP1 inhibitor family. In terms of tissue distribution, isoform 1 is detected in aorta and testis. Isoform 2 is detected in aorta.

It is found in the cytoplasm. In terms of biological role, inhibitor of PPP1CA. Has over 1000-fold higher inhibitory activity when phosphorylated, creating a molecular switch for regulating the phosphorylation status of PPP1CA substrates and smooth muscle contraction. In Homo sapiens (Human), this protein is Protein phosphatase 1 regulatory subunit 14A (PPP1R14A).